A 256-amino-acid polypeptide reads, in one-letter code: Probable hydroxyacylglutathione hydrolase glo2 (256 aa).

The Zn(2+) site is built by His-63, His-65, Asp-67, His-68, His-118, and Asp-139. Substrate contacts are provided by residues Arg-148, His-178 to Tyr-180, and Arg-250 to Lys-253. Position 178 (His-178) interacts with Zn(2+).

This sequence belongs to the metallo-beta-lactamase superfamily. Glyoxalase II family. Requires Zn(2+) as cofactor.

The protein localises to the cytoplasm. It localises to the nucleus. It carries out the reaction an S-(2-hydroxyacyl)glutathione + H2O = a 2-hydroxy carboxylate + glutathione + H(+). The catalysed reaction is (R)-S-lactoylglutathione + H2O = (R)-lactate + glutathione + H(+). It participates in secondary metabolite metabolism; methylglyoxal degradation; (R)-lactate from methylglyoxal: step 2/2. Its function is as follows. Thiolesterase that catalyzes the hydrolysis of S-D-lactoylglutathione to form glutathione and D-lactic acid. Involved in the metabolism of methylglyoxal, a toxic compound for yeast proliferation, by converting methylglyoxal to lactate via S-D-lactoylglutathione by sequential enzyme reactions catalyzed by glyoxalase I and glyoxalase II. In Schizosaccharomyces pombe (strain 972 / ATCC 24843) (Fission yeast), this protein is Probable hydroxyacylglutathione hydrolase glo2 (glo2).